A 378-amino-acid chain; its full sequence is Beta-1,3-N-acetylglucosaminyltransferase lunatic fringe (378 aa).

Over 1 to 8 the chain is Cytoplasmic; it reads MLQRCGRR. A helical; Signal-anchor for type II membrane protein transmembrane segment spans residues 9–29; the sequence is LLLALVGALLACLLVLTADPP. The Lumenal segment spans residues 30–378; the sequence is PTPMPAERGR…TPWCPRSAIF (349 aa). The tract at residues 85–108 is disordered; sequence RDADPPPGVASRQGDGHPRPPAEV. Arg-128 serves as a coordination point for substrate. An N-linked (GlcNAc...) asparagine glycan is attached at Asn-166. Intrachain disulfides connect Cys-167–Cys-178 and Cys-196–Cys-259. Residue Asp-200 participates in substrate binding. Position 201 (Asp-201) interacts with Mn(2+). Asp-289 is an active-site residue. His-313 contacts Mn(2+). Cys-363 and Cys-372 are disulfide-bonded.

Belongs to the glycosyltransferase 31 family. The cofactor is Mn(2+). Co(2+) serves as cofactor. Post-translationally, a soluble form may be derived from the membrane form by proteolytic processing. Detected at 12.5 dpc in all tissues examined with the highest level observed in adult brain and spleen. Detected in the dental epithelium.

The protein resides in the golgi apparatus. The protein localises to the golgi apparatus membrane. The enzyme catalyses 3-O-(alpha-L-fucosyl)-L-threonyl-[EGF-like domain protein] + UDP-N-acetyl-alpha-D-glucosamine = 3-O-(N-acetyl-beta-D-glucosaminyl-(1-&gt;3)-alpha-L-fucosyl)-L-threonyl-[EGF-like domain protein] + UDP + H(+). It carries out the reaction 3-O-(alpha-L-fucosyl)-L-seryl-[EGF-like domain protein] + UDP-N-acetyl-alpha-D-glucosamine = 3-O-(N-acetyl-beta-D-glucosaminyl-(1-&gt;3)-alpha-L-fucosyl)-L-seryl-[EGF-like domain protein] + UDP + H(+). Functionally, glycosyltransferase that initiates the elongation of O-linked fucose residues attached to EGF-like repeats in the extracellular domain of Notch molecules. Modulates NOTCH1 activity by modifying O-fucose residues at specific EGF-like domains resulting in inhibition of NOTCH1 activation by JAG1 and enhancement of NOTCH1 activation by DLL1 via an increase in its binding to DLL1. Decreases the binding of JAG1 to NOTCH2 but not that of DLL1. Essential mediator of somite segmentation and patterning. During somite boundary formation, it restricts Notch activity in the presomitic mesoderm to a boundary-forming territory in the posterior half of the prospective somite. In this region, Notch function activates a set of genes that are involved in boundary formation and in anterior-posterior somite identity. Ectopically expressed in the thymus, Lfgn inhibits Notch signaling which results in inhibition of T-cell commitment and promotes B-cell development in lymphoid progenitors. May play a role in boundary formation of the enamel knot. This chain is Beta-1,3-N-acetylglucosaminyltransferase lunatic fringe, found in Mus musculus (Mouse).